Here is a 359-residue protein sequence, read N- to C-terminus: Dual-specificity RNA methyltransferase RlmN (359 aa).

E98 functions as the Proton acceptor in the catalytic mechanism. One can recognise a Radical SAM core domain in the interval 104–329 (EPKRGTLCIS…LEHGLTATIR (226 aa)). An intrachain disulfide couples C111 to C340. The [4Fe-4S] cluster site is built by C118, C122, and C125. Residues 166–167 (GE), S198, 220–222 (SLH), and N297 contribute to the S-adenosyl-L-methionine site. C340 acts as the S-methylcysteine intermediate in catalysis.

Belongs to the radical SAM superfamily. RlmN family. The cofactor is [4Fe-4S] cluster.

The protein resides in the cytoplasm. The catalysed reaction is adenosine(2503) in 23S rRNA + 2 reduced [2Fe-2S]-[ferredoxin] + 2 S-adenosyl-L-methionine = 2-methyladenosine(2503) in 23S rRNA + 5'-deoxyadenosine + L-methionine + 2 oxidized [2Fe-2S]-[ferredoxin] + S-adenosyl-L-homocysteine. It catalyses the reaction adenosine(37) in tRNA + 2 reduced [2Fe-2S]-[ferredoxin] + 2 S-adenosyl-L-methionine = 2-methyladenosine(37) in tRNA + 5'-deoxyadenosine + L-methionine + 2 oxidized [2Fe-2S]-[ferredoxin] + S-adenosyl-L-homocysteine. Its function is as follows. Specifically methylates position 2 of adenine 2503 in 23S rRNA and position 2 of adenine 37 in tRNAs. m2A2503 modification seems to play a crucial role in the proofreading step occurring at the peptidyl transferase center and thus would serve to optimize ribosomal fidelity. The chain is Dual-specificity RNA methyltransferase RlmN from Halorhodospira halophila (strain DSM 244 / SL1) (Ectothiorhodospira halophila (strain DSM 244 / SL1)).